The primary structure comprises 92 residues: Small ribosomal subunit protein uS19 (92 aa).

The protein belongs to the universal ribosomal protein uS19 family.

Protein S19 forms a complex with S13 that binds strongly to the 16S ribosomal RNA. In Sodalis glossinidius (strain morsitans), this protein is Small ribosomal subunit protein uS19.